The sequence spans 510 residues: 2-isopropylmalate synthase (510 aa).

The 263-residue stretch at 5-267 (LVIFDTTLRD…DTRIDTTQIV (263 aa)) folds into the Pyruvate carboxyltransferase domain. Mn(2+) is bound by residues Asp14, His202, His204, and Asn238. A regulatory domain region spans residues 392–510 (RLLSLHAVSE…SSLERTHPQI (119 aa)).

This sequence belongs to the alpha-IPM synthase/homocitrate synthase family. LeuA type 1 subfamily. As to quaternary structure, homodimer. Mn(2+) is required as a cofactor.

It localises to the cytoplasm. The catalysed reaction is 3-methyl-2-oxobutanoate + acetyl-CoA + H2O = (2S)-2-isopropylmalate + CoA + H(+). It participates in amino-acid biosynthesis; L-leucine biosynthesis; L-leucine from 3-methyl-2-oxobutanoate: step 1/4. In terms of biological role, catalyzes the condensation of the acetyl group of acetyl-CoA with 3-methyl-2-oxobutanoate (2-ketoisovalerate) to form 3-carboxy-3-hydroxy-4-methylpentanoate (2-isopropylmalate). The polypeptide is 2-isopropylmalate synthase (Nitrosomonas europaea (strain ATCC 19718 / CIP 103999 / KCTC 2705 / NBRC 14298)).